Consider the following 69-residue polypeptide: Pantinin-1 (69 aa).

An N-terminal signal peptide occupies residues 1-23; it reads MKTQFVILMITVILMQMLVQTEG. Val37 carries the valine amide modification. Positions 41–69 are excised as a propeptide; it reads GLNDRDQLDDLFDSDLSDADIKLLKEMFK.

Belongs to the non-disulfide-bridged peptide (NDBP) superfamily. Short antimicrobial peptide (group 4) family. Expressed by the venom gland.

The protein resides in the secreted. The protein localises to the target cell membrane. Functionally, amphipathic peptide that possesses relatively strong activities against Gram-positive bacteria and a fungus, but has very weak antimicrobial activities against Gram-negative bacteria. Also exhibits very low hemolytic activities against human erythrocytes (64 uM induce 21% of hemolysis). Minimal inhibitory concentration (MIC) are the following: 8 uM against S.aureus, 32 uM against B.magaterium, 32 uM against M.luteus, 28 uM against vancomycin-resistant Enterococci, 14 uM against methicillin-resistant S.aureus, 62 uM against E.coli, &gt;87 uM against P.putida, &gt;87 uM against K.oxytoca, 76 uM against E.cloacae, 72 uM against S.enterica and 16 uM against the fungus C.tropicalis. The sequence is that of Pantinin-1 from Pandinus imperator (Emperor scorpion).